A 172-amino-acid chain; its full sequence is Large ribosomal subunit protein uL10 (172 aa).

This sequence belongs to the universal ribosomal protein uL10 family. In terms of assembly, part of the ribosomal stalk of the 50S ribosomal subunit. The N-terminus interacts with L11 and the large rRNA to form the base of the stalk. The C-terminus forms an elongated spine to which L12 dimers bind in a sequential fashion forming a multimeric L10(L12)X complex.

In terms of biological role, forms part of the ribosomal stalk, playing a central role in the interaction of the ribosome with GTP-bound translation factors. The chain is Large ribosomal subunit protein uL10 (rplJ) from Liberibacter asiaticus (Citrus greening disease).